Consider the following 104-residue polypeptide: Translation initiation factor 1A (104 aa).

The span at 1-14 (MRGQQAPPQQPTRV) shows a compositional bias: low complexity. Residues 1–20 (MRGQQAPPQQPTRVRTPREN) form a disordered region. The region spanning 12 to 87 (TRVRTPRENE…EKCDVIWRYT (76 aa)) is the S1-like domain.

It belongs to the eIF-1A family.

Seems to be required for maximal rate of protein biosynthesis. Enhances ribosome dissociation into subunits and stabilizes the binding of the initiator Met-tRNA(I) to 40 S ribosomal subunits. The protein is Translation initiation factor 1A (eIF1A) of Methanococcus maripaludis (strain C6 / ATCC BAA-1332).